The chain runs to 279 residues: MQPIIELNNIQFNYQPEDASPALKDVSFSIQQGEWVAIIGHNGSGKSTLAKTINGLLLPAAGTIKVGGKELNEANVWDIRRMVGMVFQNPDNQFVGSTVEDDVAFGLENQGIPRDEMVERVHDALERVRMLDFAKREPARLSGGQKQRVAIAGVVALRPDIIILDEATSMLDPEGRAEVIATIQKIKEESNLTVISITHDIDEAANANRILVMRQGQLTNEGTPEKIFSAGEALVEMGLDLPFPEKLKVALKERGVVVPTNYLTEEGMVDWLWTSVLNK.

Residues 5 to 240 (IELNNIQFNY…GEALVEMGLD (236 aa)) enclose the ABC transporter domain. 40-47 (GHNGSGKS) is an ATP binding site.

Belongs to the ABC transporter superfamily. Energy-coupling factor EcfA family. In terms of assembly, forms a stable energy-coupling factor (ECF) transporter complex composed of 2 membrane-embedded substrate-binding proteins (S component), 2 ATP-binding proteins (A component) and 2 transmembrane proteins (T component).

It localises to the cell membrane. Its function is as follows. ATP-binding (A) component of a common energy-coupling factor (ECF) ABC-transporter complex. Unlike classic ABC transporters this ECF transporter provides the energy necessary to transport a number of different substrates. The chain is Energy-coupling factor transporter ATP-binding protein EcfA1 from Enterococcus faecalis (strain ATCC 700802 / V583).